Here is a 319-residue protein sequence, read N- to C-terminus: Pre T-cell antigen receptor alpha (319 aa).

The N-terminal stretch at 1-16 is a signal peptide; that stretch reads MAESWLLLLLALGCPA. The Extracellular segment spans residues 17–160; the sequence is LPTEVTTLLR…LRGTRALVLR (144 aa). C58 and C118 are joined by a disulfide. N78 is a glycosylation site (N-linked (GlcNAc...) asparagine). Residues 161–181 form a helical membrane-spanning segment; it reads LGALRLLLFKLLLLDVLLTCG. The Cytoplasmic portion of the chain corresponds to 182–319; it reads RLHAPPAARG…PPADPSFPGG (138 aa). Low complexity predominate over residues 189–207; sequence ARGDPAGASGPGAPSLPAP. Residues 189–293 are disordered; that stretch reads ARGDPAGASG…VLRAWSSGPS (105 aa). A compositionally biased stretch (basic residues) spans 260 to 271; sequence RRRRVHTRRPRR.

As to quaternary structure, heterodimer with TCRB; disulfide linked. This heterodimer assembles with CD3 proteins into a signaling-competent pre-T-cell receptor complex. Interacts with RHBDD1.

The protein localises to the membrane. Its subcellular location is the cell membrane. Its function is as follows. Component of the pre-T-cell receptor complex (composed of PTCRA, TCRB and the CD3 complex) that has a crucial role in early T-cell development, particularly alpha-beta T cell differentiation. The protein is Pre T-cell antigen receptor alpha (PTCRA) of Bos taurus (Bovine).